Reading from the N-terminus, the 485-residue chain is Probable L-xylulose kinase (485 aa).

Belongs to the FGGY kinase family. In terms of assembly, homodimer.

It catalyses the reaction L-xylulose + ATP = L-xylulose 5-phosphate + ADP + H(+). This chain is Probable L-xylulose kinase (lyx), found in Haemophilus influenzae (strain ATCC 51907 / DSM 11121 / KW20 / Rd).